A 166-amino-acid chain; its full sequence is Disulfide bond formation protein B (166 aa).

The Cytoplasmic portion of the chain corresponds to 1–11 (MIALPRNRRPL). A helical membrane pass occupies residues 12 to 28 (FLAVFAYCAALLAFGLY). Topologically, residues 29–46 (LQHYQGIEPCPMCIMQRY) are periplasmic. Cys-38 and Cys-41 are joined by a disulfide. A helical membrane pass occupies residues 47–63 (AFALVGVIALVAGLHGP). The Cytoplasmic portion of the chain corresponds to 64–70 (RGAGVRV). A helical membrane pass occupies residues 71 to 87 (YGGLLLLTALAGGSVAA). Residues 88–143 (RQTWMQLYPPEIPECGPGLEYMLESFPLTSALPMIFRGAGDCSAIDWTFLGLSLAN) lie on the Periplasmic side of the membrane. Cys-102 and Cys-129 are joined by a disulfide. The chain crosses the membrane as a helical span at residues 144–162 (WSLLNFGAAALLALWLLFG). Over 163 to 166 (RRVR) the chain is Cytoplasmic.

This sequence belongs to the DsbB family.

Its subcellular location is the cell inner membrane. In terms of biological role, required for disulfide bond formation in some periplasmic proteins. Acts by oxidizing the DsbA protein. The sequence is that of Disulfide bond formation protein B from Azoarcus sp. (strain BH72).